The chain runs to 297 residues: MEIGLREWLILIGIIVIAGILFDGWRRMRGGKGKLKFRLDRSYSNLPDEEGGSAEVLGPSRVLDTHKEPELDESDLPSLSASARDREREPKPVKASKRGKRASAAADVHQGDLNLSAEPREPDLFSDSDDDFAADNNRSSGAAPASNSVKELPPAEEVLVISVISRDEGGFKGPALLQNILESGLRFGEMDIFHRHESMAGHGEVLFSMANAVKPGVFDLDDIDHFSTRAVSFFLGLPGPRHPKQAFDVMVAAARKLAHELNGELKDDQRSVLTAQTIEHYRQRIVEFERRALTQKR.

Met1 is a topological domain (periplasmic). Residues Glu2 to Phe22 form a helical membrane-spanning segment. The Cytoplasmic segment spans residues Asp23 to Arg297. Positions Asp48–Glu151 are disordered. Over residues Ala83–Pro92 the composition is skewed to basic and acidic residues. Residues Leu124–Ala133 are compositionally biased toward acidic residues.

It belongs to the ZipA family. As to quaternary structure, interacts with FtsZ via their C-terminal domains.

Its subcellular location is the cell inner membrane. Essential cell division protein that stabilizes the FtsZ protofilaments by cross-linking them and that serves as a cytoplasmic membrane anchor for the Z ring. Also required for the recruitment to the septal ring of downstream cell division proteins. In Pseudomonas putida (strain ATCC 47054 / DSM 6125 / CFBP 8728 / NCIMB 11950 / KT2440), this protein is Cell division protein ZipA.